Consider the following 771-residue polypeptide: Receptor like protein 22 (771 aa).

Positions 1–20 (MSNLRLRLLSLVSILYCIAA) are cleaved as a signal peptide. Residues 21–729 (LRCRPDQTET…EEEEILEWRA (709 aa)) are Extracellular-facing. 6 N-linked (GlcNAc...) asparagine glycosylation sites follow: Asn-46, Asn-58, Asn-80, Asn-93, Asn-134, and Asn-158. 12 LRR repeats span residues 86–110 (LSHL…AFGQ), 112–135 (NNLE…IRNL), 136–159 (TKLT…VQNL), 160–183 (TKLL…FFTM), 185–206 (FLSY…SNSS), 207–230 (SKLE…VLRL), 232–254 (NLRY…IFSP), 255–281 (LQSL…DFPK), 283–303 (MEIL…LKSL), 304–327 (KKLW…IWSL), 329–350 (LLVS…LDHV), and 353–377 (NSSV…PVSI). Asn-204 carries N-linked (GlcNAc...) asparagine glycosylation. Asn-242 carries N-linked (GlcNAc...) asparagine glycosylation. The N-linked (GlcNAc...) asparagine glycan is linked to Asn-292. Residues Asn-337, Asn-344, Asn-353, Asn-379, Asn-384, Asn-397, Asn-410, Asn-421, Asn-466, and Asn-481 are each glycosylated (N-linked (GlcNAc...) asparagine). Residues 378–397 (INLSAWNNSFTGDIPLSVCN) form an LRR 13; degenerate repeat. LRR repeat units lie at residues 398 to 419 (RTSL…PPCM), 420 to 443 (GNFT…FYSG), 445 to 467 (LTQT…LLNC), 469 to 491 (FIRF…LKAL), 492 to 516 (PNLK…DQSS), 519 to 543 (FPKL…YFAN), 588 to 612 (LTFY…IGLL), 613 to 636 (KTLI…FANV), 637 to 660 (TELE…LGRL), and 662 to 685 (YLAY…QIIG). Residue Asn-543 is glycosylated (N-linked (GlcNAc...) asparagine). N-linked (GlcNAc...) asparagine glycosylation is found at Asn-619, Asn-622, and Asn-635. A helical membrane pass occupies residues 730–750 (AAIGYGPGVLFGLAIGHVVAL). Residues 751 to 771 (YKPGWFIKNNGQNRLRGIRHP) are Cytoplasmic-facing.

Belongs to the RLP family.

The protein resides in the cell membrane. The protein is Receptor like protein 22 of Arabidopsis thaliana (Mouse-ear cress).